The sequence spans 119 residues: Small ribosomal subunit protein bS16 (119 aa).

The protein belongs to the bacterial ribosomal protein bS16 family.

In Chlamydia caviae (strain ATCC VR-813 / DSM 19441 / 03DC25 / GPIC) (Chlamydophila caviae), this protein is Small ribosomal subunit protein bS16.